A 115-amino-acid chain; its full sequence is Non-specific lipid-transfer protein (115 aa).

Residues 1–24 (MASSAVTKLALVVALCMAVSVAHA) form the signal peptide. Cystine bridges form between C27–C74, C37–C51, C52–C97, and C72–C111.

This sequence belongs to the plant LTP family.

Its function is as follows. Plant non-specific lipid-transfer proteins transfer phospholipids as well as galactolipids across membranes. May play a role in wax or cutin deposition in the cell walls of expanding epidermal cells and certain secretory tissues. This Malus domestica (Apple) protein is Non-specific lipid-transfer protein (MALD3).